Reading from the N-terminus, the 1074-residue chain is Probable arabinosyltransferase C (1074 aa).

10 consecutive transmembrane segments (helical) span residues 15–37, 214–236, 251–273, 415–437, 452–474, 516–538, 573–595, 608–630, 645–667, and 684–706; these read ARLV…PLLP, LLKL…ALHV, SRWW…WHFV, IIIG…ALLV, RFGY…FLIF, SVAR…AMTL, THQF…VAVT, FGAA…WYVS, FGFT…WFHF, and LLVA…SLTL.

Belongs to the emb family.

The protein localises to the cell membrane. Its function is as follows. Arabinosyl transferase responsible for the polymerization of arabinose into the arabinan of arabinogalactan. This chain is Probable arabinosyltransferase C (embC), found in Mycolicibacterium smegmatis (Mycobacterium smegmatis).